A 40-amino-acid polypeptide reads, in one-letter code: Ice-structuring protein GS-8 (40 aa).

M1 is subject to Blocked amino end (Met).

This sequence belongs to the type-I AFP family.

In terms of biological role, antifreeze proteins lower the blood freezing point. The sequence is that of Ice-structuring protein GS-8 from Myoxocephalus aenaeus (Grubby sculpin).